The primary structure comprises 3795 residues: NBPF family member NBPF10 (3795 aa).

Residues arginine 75 to alanine 119 are a coiled coil. The segment at lysine 161–proline 200 is disordered. Residues glutamate 165 to glutamate 177 are compositionally biased toward acidic residues. Residues glutamate 165–proline 259 enclose the Olduvai 1 domain. The segment covering glutamate 190–proline 200 has biased composition (basic and acidic residues). A coiled-coil region spans residues arginine 346–alanine 390. Olduvai domains follow at residues glutamate 436–proline 528, glutamate 529–glycine 600, arginine 601–proline 692, serine 695–aspartate 750, arginine 751–lysine 843, glutamate 844–proline 936, serine 939–aspartate 994, arginine 995–lysine 1087, glutamate 1088–proline 1180, serine 1183–aspartate 1238, arginine 1239–lysine 1331, glutamate 1332–proline 1424, serine 1427–aspartate 1482, arginine 1483–lysine 1575, glutamate 1576–proline 1668, serine 1671–aspartate 1726, arginine 1727–lysine 1819, glutamate 1820–proline 1912, serine 1915–aspartate 1970, arginine 1971–lysine 2063, glutamate 2064–proline 2156, serine 2159–aspartate 2214, arginine 2215–lysine 2307, glutamate 2308–proline 2400, serine 2403–aspartate 2458, arginine 2459–lysine 2551, glutamate 2552–proline 2644, serine 2647–aspartate 2702, arginine 2703–lysine 2795, glutamate 2796–proline 2888, serine 2891–aspartate 2946, arginine 2947–lysine 3039, glutamate 3040–proline 3132, serine 3135–aspartate 3190, arginine 3191–lysine 3283, glutamate 3284–proline 3376, serine 3379–aspartate 3434, arginine 3435–lysine 3527, glutamate 3528–proline 3620, serine 3623–lysine 3696, and glutamate 3697–glutamine 3795. 2 disordered regions span residues glutamate 451 to leucine 475 and tryptophan 520 to serine 566. 2 stretches are compositionally biased toward acidic residues: residues asparagine 530 to glutamate 539 and glutamate 550 to aspartate 562. Residues lysine 830–leucine 868 are disordered. Over residues glycine 831–arginine 849 the composition is skewed to basic residues. Positions lysine 1073–arginine 1109 are disordered. Basic residues predominate over residues glycine 1075–arginine 1093. Disordered stretches follow at residues lysine 1242–leucine 1261 and lysine 1318–arginine 1353. Residues glycine 1319–arginine 1337 show a composition bias toward basic residues. The disordered stretch occupies residues lysine 1562–leucine 1600. The span at glycine 1563 to arginine 1581 shows a compositional bias: basic residues. Residues lysine 1806–leucine 1844 are disordered. Positions glycine 1807–arginine 1825 are enriched in basic residues. Positions lysine 2050–leucine 2088 are disordered. A compositionally biased stretch (basic residues) spans glycine 2051–arginine 2069. Positions lysine 2294–leucine 2332 are disordered. Residues glycine 2295–arginine 2313 show a composition bias toward basic residues. The segment at lysine 2538–leucine 2576 is disordered. The span at glycine 2539–arginine 2557 shows a compositional bias: basic residues. The segment at lysine 2782–leucine 2820 is disordered. Positions glycine 2783–arginine 2801 are enriched in basic residues. The tract at residues lysine 3026–leucine 3064 is disordered. A compositionally biased stretch (basic residues) spans glycine 3027–arginine 3045. 2 disordered regions span residues lysine 3194–leucine 3213 and lysine 3270–leucine 3308. The span at glycine 3271–arginine 3289 shows a compositional bias: basic residues. Disordered regions lie at residues lysine 3514–leucine 3552 and glycine 3684–leucine 3716. Composition is skewed to basic residues over residues glycine 3515–arginine 3533 and glycine 3684–arginine 3702.

It belongs to the NBPF family.

It is found in the cytoplasm. This is NBPF family member NBPF10 from Homo sapiens (Human).